The sequence spans 240 residues: Large ribosomal subunit protein bL25 (240 aa).

Disordered regions lie at residues 1-23 (MATVKELKATARPAGGKGAARAE) and 207-240 (PAAAPAAGAKAPAAGAKAPAAGAKAPAAPAAKKK).

It belongs to the bacterial ribosomal protein bL25 family. CTC subfamily. As to quaternary structure, part of the 50S ribosomal subunit; part of the 5S rRNA/L5/L18/L25 subcomplex. Contacts the 5S rRNA. Binds to the 5S rRNA independently of L5 and L18.

Functionally, this is one of the proteins that binds to the 5S RNA in the ribosome where it forms part of the central protuberance. This Rhodopseudomonas palustris (strain BisB18) protein is Large ribosomal subunit protein bL25.